The chain runs to 309 residues: Golgi-associated RAB2 interactor protein 1A (309 aa).

Residues serine 231, serine 263, and serine 267 each carry the phosphoserine modification.

The protein belongs to the GARIN family. Interacts (via N-terminus) with RAB2B (in GTP-bound form).

It is found in the golgi apparatus. Functionally, RAB2B effector protein required for accurate acrosome formation and normal male fertility. The polypeptide is Golgi-associated RAB2 interactor protein 1A (Homo sapiens (Human)).